An 87-amino-acid chain; its full sequence is Beta-toxin Ct17 (87 aa).

Residues M1–A19 form the signal peptide. Positions K20–G85 constitute an LCN-type CS-alpha/beta domain. Intrachain disulfides connect C31–C84, C35–C60, C44–C65, and C48–C67. Cysteine amide is present on C84.

Belongs to the long (4 C-C) scorpion toxin superfamily. Sodium channel inhibitor family. Beta subfamily. As to expression, expressed by the venom gland.

Its subcellular location is the secreted. Its function is as follows. Beta toxins bind voltage-independently at site-4 of sodium channels (Nav) and shift the voltage of activation toward more negative potentials thereby affecting sodium channel activation and promoting spontaneous and repetitive firing. Is possibly lethal to mice, freshwater shrimp and crickets. The sequence is that of Beta-toxin Ct17 from Centruroides tecomanus (Scorpion).